The following is a 101-amino-acid chain: Aspartyl/glutamyl-tRNA(Asn/Gln) amidotransferase subunit C (101 aa).

It belongs to the GatC family. Heterotrimer of A, B and C subunits.

The catalysed reaction is L-glutamyl-tRNA(Gln) + L-glutamine + ATP + H2O = L-glutaminyl-tRNA(Gln) + L-glutamate + ADP + phosphate + H(+). The enzyme catalyses L-aspartyl-tRNA(Asn) + L-glutamine + ATP + H2O = L-asparaginyl-tRNA(Asn) + L-glutamate + ADP + phosphate + 2 H(+). In terms of biological role, allows the formation of correctly charged Asn-tRNA(Asn) or Gln-tRNA(Gln) through the transamidation of misacylated Asp-tRNA(Asn) or Glu-tRNA(Gln) in organisms which lack either or both of asparaginyl-tRNA or glutaminyl-tRNA synthetases. The reaction takes place in the presence of glutamine and ATP through an activated phospho-Asp-tRNA(Asn) or phospho-Glu-tRNA(Gln). The chain is Aspartyl/glutamyl-tRNA(Asn/Gln) amidotransferase subunit C from Lactococcus lactis subsp. cremoris (strain SK11).